Reading from the N-terminus, the 83-residue chain is Exodeoxyribonuclease 7 small subunit (83 aa).

The protein belongs to the XseB family. In terms of assembly, heterooligomer composed of large and small subunits.

The protein localises to the cytoplasm. It catalyses the reaction Exonucleolytic cleavage in either 5'- to 3'- or 3'- to 5'-direction to yield nucleoside 5'-phosphates.. Functionally, bidirectionally degrades single-stranded DNA into large acid-insoluble oligonucleotides, which are then degraded further into small acid-soluble oligonucleotides. The protein is Exodeoxyribonuclease 7 small subunit of Nitrobacter winogradskyi (strain ATCC 25391 / DSM 10237 / CIP 104748 / NCIMB 11846 / Nb-255).